A 325-amino-acid polypeptide reads, in one-letter code: Ribosomal RNA small subunit methyltransferase H (325 aa).

Residues 33 to 35 (GGH), Asp52, Leu87, Asp101, and Gln108 each bind S-adenosyl-L-methionine. Residues 285-325 (AEPAGEVEKADNPRAASVRLRAAERTAPNPDRTQPTIGGAS) are disordered. The segment covering 315–325 (DRTQPTIGGAS) has biased composition (polar residues).

This sequence belongs to the methyltransferase superfamily. RsmH family.

The protein resides in the cytoplasm. The catalysed reaction is cytidine(1402) in 16S rRNA + S-adenosyl-L-methionine = N(4)-methylcytidine(1402) in 16S rRNA + S-adenosyl-L-homocysteine + H(+). Functionally, specifically methylates the N4 position of cytidine in position 1402 (C1402) of 16S rRNA. The sequence is that of Ribosomal RNA small subunit methyltransferase H from Frankia alni (strain DSM 45986 / CECT 9034 / ACN14a).